The sequence spans 321 residues: ATP phosphoribosyltransferase regulatory subunit (321 aa).

This sequence belongs to the class-II aminoacyl-tRNA synthetase family. HisZ subfamily. As to quaternary structure, heteromultimer composed of HisG and HisZ subunits.

It is found in the cytoplasm. Its pathway is amino-acid biosynthesis; L-histidine biosynthesis; L-histidine from 5-phospho-alpha-D-ribose 1-diphosphate: step 1/9. Required for the first step of histidine biosynthesis. May allow the feedback regulation of ATP phosphoribosyltransferase activity by histidine. The chain is ATP phosphoribosyltransferase regulatory subunit from Thiobacillus denitrificans (strain ATCC 25259 / T1).